Reading from the N-terminus, the 399-residue chain is MKSVEEQLALIKRGAEELLVESELIEKLKRGEPLRIKAGFDPTAPDLHLGHTVLINKLRQFQDLGHQVIFLIGDFTGMIGDPSGKSATRPPLTREQVLENAETYKSQVFKILDPAKTEVAFNSTWMDKMGPADFIRLTSQYTVARMLERDDFDKRYSTNQPIAIHEFLYPLVQGYDSVALRADVELGGTDQKFNLLMGRELQRGYGQEAQCILTMPLLEGLDGVKKMSKSLGNYVGIQEAPGVMYGKLVSIPDALMWRYFELLSFRSMDEINAFKADVDAGANPRDIKIKLAEEIVARFHGEEAAANAHRAAGNRMKDGELPDDLPEIELVAAEDMPIAAVLNKAGLVKNAAMARDLLGSGGVRVDGEVVDRTYIYAVGSTHVCQAGRKAFARITLKSE.

The 'HIGH' region motif lies at 42–51; it reads PTAPDLHLGH. The 'KMSKS' region signature appears at 226–230; sequence KMSKS. Lys229 contributes to the ATP binding site. Residues 336–396 form the S4 RNA-binding domain; sequence MPIAAVLNKA…GRKAFARITL (61 aa).

It belongs to the class-I aminoacyl-tRNA synthetase family. TyrS type 2 subfamily. In terms of assembly, homodimer.

It is found in the cytoplasm. The catalysed reaction is tRNA(Tyr) + L-tyrosine + ATP = L-tyrosyl-tRNA(Tyr) + AMP + diphosphate + H(+). Functionally, catalyzes the attachment of tyrosine to tRNA(Tyr) in a two-step reaction: tyrosine is first activated by ATP to form Tyr-AMP and then transferred to the acceptor end of tRNA(Tyr). The polypeptide is Tyrosine--tRNA ligase (Pseudomonas fluorescens (strain ATCC BAA-477 / NRRL B-23932 / Pf-5)).